We begin with the raw amino-acid sequence, 71 residues long: Large ribosomal subunit protein bL31 (71 aa).

The Zn(2+) site is built by C16, C18, C37, and C40.

The protein belongs to the bacterial ribosomal protein bL31 family. Type A subfamily. As to quaternary structure, part of the 50S ribosomal subunit. It depends on Zn(2+) as a cofactor.

Binds the 23S rRNA. In Pseudoalteromonas atlantica (strain T6c / ATCC BAA-1087), this protein is Large ribosomal subunit protein bL31.